The chain runs to 350 residues: UDP-rhamnose/UDP-galactose transporter 3 (350 aa).

Helical transmembrane passes span 12–32, 41–61, 81–101, 104–124, 133–153, 160–180, 200–220, 224–244, 257–277, and 286–306; these read AVSDMGAWAMNVISSVGIIMA, GFAFSFATTLTGFHFALTALV, LIWFSIVANVSIAAMNFSLML, VGFYQISKLSMIPVVCVMEWI, EVKISVVVVVVGVGICTVTDV, FICACVAIFSSSLQQILIGSL, AFSLLVVGPLVDYLLSGKFIM, MSSGCFLFILLSCGLAVFCNI, SFQVIGHMKTVCILTLGWLLF, and VAGMIVAIVGMVIYSWAMELE.

This sequence belongs to the TPT transporter family. TPT (TC 2.A.7.9) subfamily.

The protein localises to the golgi apparatus membrane. Nucleotide-sugar transporter that transports UDP-rhamnose or UDP-galactose and UMP in a strict counter-exchange mode. This chain is UDP-rhamnose/UDP-galactose transporter 3, found in Arabidopsis thaliana (Mouse-ear cress).